Reading from the N-terminus, the 490-residue chain is ATP synthase subunit beta, chloroplastic (490 aa).

170–177 (GGAGVGKT) contacts ATP.

It belongs to the ATPase alpha/beta chains family. As to quaternary structure, F-type ATPases have 2 components, CF(1) - the catalytic core - and CF(0) - the membrane proton channel. CF(1) has five subunits: alpha(3), beta(3), gamma(1), delta(1), epsilon(1). CF(0) has four main subunits: a(1), b(1), b'(1) and c(9-12).

It localises to the plastid. Its subcellular location is the chloroplast thylakoid membrane. It carries out the reaction ATP + H2O + 4 H(+)(in) = ADP + phosphate + 5 H(+)(out). Functionally, produces ATP from ADP in the presence of a proton gradient across the membrane. The catalytic sites are hosted primarily by the beta subunits. The polypeptide is ATP synthase subunit beta, chloroplastic (Ipomoea quamoclit (Cypress vine)).